Reading from the N-terminus, the 106-residue chain is Transcription initiation factor IIA subunit 2 (106 aa).

It belongs to the TFIIA subunit 2 family. As to quaternary structure, TFIIA is a heterodimer of the large unprocessed subunit 1 and a small subunit gamma. It was originally believed to be a heterotrimer of an alpha, a beta and a gamma subunit.

The protein localises to the nucleus. TFIIA is a component of the transcription machinery of RNA polymerase II and plays an important role in transcriptional activation. TFIIA in a complex with TBP mediates transcriptional activity. This Arabidopsis thaliana (Mouse-ear cress) protein is Transcription initiation factor IIA subunit 2 (TFIIA-S).